A 245-amino-acid chain; its full sequence is Large ribosomal subunit protein uL29m (245 aa).

Composition is skewed to low complexity over residues 36-49 and 234-245; these read SFNSQRSQFSTSSS and STKSETTTSKNI. Disordered stretches follow at residues 36-98 and 207-245; these read SFNS…NPDH and RPSPDEVLEEETETAMPTEVMPEELDSSTKSETTTSKNI.

This sequence belongs to the universal ribosomal protein uL29 family. Component of the mitochondrial large ribosomal subunit. Mature mitochondrial ribosomes consist of a small (37S) and a large (54S) subunit. The 37S subunit contains at least 33 different proteins and 1 molecule of RNA (15S). The 54S subunit contains at least 45 different proteins and 1 molecule of RNA (21S).

Its subcellular location is the mitochondrion. The polypeptide is Large ribosomal subunit protein uL29m (MRPL4) (Coccidioides immitis (strain RS) (Valley fever fungus)).